The chain runs to 83 residues: NADH dehydrogenase [ubiquinone] iron-sulfur protein 5-B (83 aa).

A CHCH domain is found at 11–52 (KGRCYDFWMDFSECMSHCREPKDCTLLREDYLECLHHSKEFQ). 2 short sequence motifs (cx9C motif) span residues 14-24 (CYDFWMDFSEC) and 34-44 (CTLLREDYLEC). Cystine bridges form between Cys14–Cys44 and Cys24–Cys34. The disordered stretch occupies residues 62-83 (QRKLRAASRKGEETGDGTHTHH).

The protein belongs to the complex I NDUFS5 subunit family. As to quaternary structure, complex I is composed of at least 49 different subunits. This is a component of the iron-sulfur (IP) fragment of the enzyme.

It is found in the mitochondrion. The protein resides in the mitochondrion inner membrane. The protein localises to the mitochondrion intermembrane space. Accessory subunit of the mitochondrial membrane respiratory chain NADH dehydrogenase (Complex I), that is believed not to be involved in catalysis. Complex I functions in the transfer of electrons from NADH to the respiratory chain. The immediate electron acceptor for the enzyme is believed to be ubiquinone. This is NADH dehydrogenase [ubiquinone] iron-sulfur protein 5-B from Arabidopsis thaliana (Mouse-ear cress).